The following is a 270-amino-acid chain: Centriole, cilia and spindle-associated protein (270 aa).

N-acetylmethionine is present on M1. Positions 9–15 match the ST]-E-Y-X(3)-Y motif 1; required for efficient microtubule binding and stabilization motif; it reads SEYMKRY. Disordered stretches follow at residues 50–201 and 231–255; these read DDWG…SQKT and LVAQRQRAHSVDVEKNRKMKASSSE. Residues 53-67 show a composition bias toward low complexity; sequence GPAGSSEDSASSESS. Over residues 75 to 86 the composition is skewed to pro residues; it reads RCAPPSPPPPVE. Basic and acidic residues predominate over residues 92 to 101; that stretch reads EAERRARGAP. Over residues 102-118 the composition is skewed to acidic residues; that stretch reads EEQDAEAGDAEAEDAED. Basic and acidic residues predominate over residues 127–144; sequence KDVEDKPEQQTRTRETDK. The segment covering 145-156 has biased composition (polar residues); the sequence is SPTSTEPRQQPS. An ST]-E-Y-X(3)-Y motif 2; required for efficient microtubule binding and stabilization motif is present at residues 260 to 266; that stretch reads TEYMRCY.

Belongs to the CCSAP family. In terms of assembly, associates with microtubules; the association occurs on polyglutamylated tubulin.

It localises to the cytoplasm. Its subcellular location is the cytoskeleton. The protein localises to the microtubule organizing center. It is found in the centrosome. The protein resides in the centriole. It localises to the spindle. Its subcellular location is the cilium basal body. The protein localises to the cilium axoneme. It is found in the cell projection. The protein resides in the axon. It localises to the cilium. In terms of biological role, plays a role in microtubule (MT) stabilization and this stabilization involves the maintenance of NUMA1 at the spindle poles. Colocalizes with polyglutamylated MTs to promote MT stabilization and regulate bipolar spindle formation in mitosis. Binding of CCSAP to centrosomes and the spindle around centrosomes during mitosis inhibits MT depolymerization, thereby stabilizing the mitotic spindle. May play a role in embryonic development. May be required for proper cilia beating. The protein is Centriole, cilia and spindle-associated protein (CCSAP) of Homo sapiens (Human).